We begin with the raw amino-acid sequence, 172 residues long: Putative RNA polymerase II transcriptional coactivator (172 aa).

Disordered regions lie at residues 1 to 43 and 123 to 172; these read MPPK…QDGN and QTDA…DDDE. A compositionally biased stretch (polar residues) spans 24 to 43; that stretch reads GNTGKAQPQELTKGSDQDGN. Residues 131-144 show a composition bias toward basic and acidic residues; it reads PKVKALESNKESIK. The span at 158 to 172 shows a compositional bias: acidic residues; it reads TSDEEEAAEDEDDDE.

It belongs to the transcriptional coactivator PC4 family.

It localises to the nucleus. In terms of biological role, general coactivator that functions cooperatively with TAFs and mediates functional interactions between upstream activators and the general transcriptional machinery. Binds single-stranded DNA. The protein is Putative RNA polymerase II transcriptional coactivator of Neurospora crassa (strain ATCC 24698 / 74-OR23-1A / CBS 708.71 / DSM 1257 / FGSC 987).